The following is a 415-amino-acid chain: Serine/threonine transporter SstT (415 aa).

8 helical membrane-spanning segments follow: residues 23-43 (ILVG…AAIA), 47-67 (LGTL…LMLV), 85-105 (ILWL…LFSF), 144-164 (ALLK…GFAL), 181-201 (AVTF…FGLV), 220-240 (LMVL…LIVF), 303-323 (GAAI…GIAV), and 333-353 (VVAS…LLLI).

It belongs to the dicarboxylate/amino acid:cation symporter (DAACS) (TC 2.A.23) family.

It localises to the cell inner membrane. It carries out the reaction L-serine(in) + Na(+)(in) = L-serine(out) + Na(+)(out). The catalysed reaction is L-threonine(in) + Na(+)(in) = L-threonine(out) + Na(+)(out). Functionally, involved in the import of serine and threonine into the cell, with the concomitant import of sodium (symport system). In Cronobacter sakazakii (strain ATCC BAA-894) (Enterobacter sakazakii), this protein is Serine/threonine transporter SstT.